The primary structure comprises 96 residues: UPF0235 protein Sputw3181_1321 (96 aa).

This sequence belongs to the UPF0235 family.

This Shewanella sp. (strain W3-18-1) protein is UPF0235 protein Sputw3181_1321.